A 139-amino-acid chain; its full sequence is D-ribose pyranase (139 aa).

His-20 functions as the Proton donor in the catalytic mechanism. Substrate contacts are provided by residues Asp-28, His-106, and 128-130 (YAN).

Belongs to the RbsD / FucU family. RbsD subfamily. Homodecamer.

Its subcellular location is the cytoplasm. The enzyme catalyses beta-D-ribopyranose = beta-D-ribofuranose. It functions in the pathway carbohydrate metabolism; D-ribose degradation; D-ribose 5-phosphate from beta-D-ribopyranose: step 1/2. In terms of biological role, catalyzes the interconversion of beta-pyran and beta-furan forms of D-ribose. The polypeptide is D-ribose pyranase (Escherichia coli O45:K1 (strain S88 / ExPEC)).